A 775-amino-acid chain; its full sequence is DENN domain-containing protein 1B (775 aa).

Positions 14–143 (DLVLKVKCHA…YNHPVPKANT (130 aa)) constitute a uDENN domain. In terms of domain architecture, cDENN spans 180–316 (GLPTIPESRN…VVSALKNKLK (137 aa)). Residues 318-395 (QSTATGDGVA…DGRLAKLNAG (78 aa)) enclose the dDENN domain. The FXDXF motif motif lies at 398–402 (FSDVF). Residue Tyr520 is modified to Phosphotyrosine. 4 positions are modified to phosphoserine: Ser535, Ser536, Ser549, and Ser552. The Clathrin box motif lies at 566–575 (DLLGEILDTL). Disordered regions lie at residues 635-654 (DSAL…VSSS) and 671-706 (HLGA…KRET). Residues 639-651 (HGKHLPPSPRKRV) show a composition bias toward basic residues. Phosphoserine occurs at positions 652 and 653. Positions 695 to 706 (QTDKGKTEKRET) are enriched in basic and acidic residues.

In terms of assembly, interacts with RAB35. Interacts with clathrin heavy chain/CLTC. Interacts with components of the adapter protein complex 2 (AP-2) AP2A2 and AP2B1. Interacts with CD3E. Post-translationally, phosphorylated on serine and/or threonine, possibly regulating the guanine nucleotide exchange factor (GEF) activity. In terms of tissue distribution, highly expressed in dendritic and natural killer cells and at lower levels in other myeloid lineage cells and in pituitary. Significantly up-regulated in effector memory T-cells as compared with naive T-cells.

It localises to the cytoplasm. The protein resides in the cytosol. Its subcellular location is the cytoplasmic vesicle. It is found in the clathrin-coated vesicle. In terms of biological role, guanine nucleotide exchange factor (GEF) for RAB35 that acts as a regulator of T-cell receptor (TCR) internalization in TH2 cells. Acts by promoting the exchange of GDP to GTP, converting inactive GDP-bound RAB35 into its active GTP-bound form. Plays a role in clathrin-mediated endocytosis. Controls cytokine production in TH2 lymphocytes by controlling the rate of TCR internalization and routing to endosomes: acts by mediating clathrin-mediated endocytosis of TCR via its interaction with the adapter protein complex 2 (AP-2) and GEF activity. Dysregulation leads to impaired TCR down-modulation and recycling, affecting cytokine production in TH2 cells. This Homo sapiens (Human) protein is DENN domain-containing protein 1B.